Reading from the N-terminus, the 224-residue chain is uncharacterized protein (224 aa).

This is an uncharacterized protein from Listeria monocytogenes serovar 1/2a (strain ATCC BAA-679 / EGD-e).